Consider the following 256-residue polypeptide: ATG8-interacting protein 1 (256 aa).

The AIM (Atg8-family-interacting motif) signature appears at Trp14–Val17. Residues Ala181–Gly200 form a helical membrane-spanning segment. Positions Trp208–Leu211 match the AIM (Atg8-family-interacting motif) motif.

In terms of assembly, interacts with ATG8F. Interacts with ATG8H. Interacts with APE1 and PSBS/NPQ4.

It is found in the endoplasmic reticulum membrane. The protein resides in the membrane. The protein localises to the plastid. It localises to the chloroplast membrane. Functionally, involved in a special stress-induced plastid-to-vacuole protein trafficking pathway. Interacts with ATG8F in plastid bodies to subsequently enable their delivery to the vacuole by an autophagic pathway. Interacts with the plastid proteins APE1 and PSBS/NPQ4 and may recruit them as cargo into plastid bodies that may be recognized by the autophagy machinery for degradation in the vacuole. Involved in the alleviation of damage caused by salt stress during plant development, probably through its involvement in plastid-to-vacuole and ER-to-vacuole trafficking. Plays a role in seed germination in response to exogenous abscisic acid (ABA) treatment. The sequence is that of ATG8-interacting protein 1 from Arabidopsis thaliana (Mouse-ear cress).